The chain runs to 523 residues: Cytochrome P450 CYP82J17 (523 aa).

The chain crosses the membrane as a helical span at residues phenylalanine 4–tryptophan 24. Position 462 (cysteine 462) interacts with heme.

Belongs to the cytochrome P450 family. Mainly expressed in leaves and seed pods and, to a lower extent, in flowers and stems.

The protein localises to the membrane. The protein operates within steroid metabolism; cholesterol metabolism. In terms of biological role, involved in the biosynthesis of spiroketal steroid and saponin natural products from cholesterol such as diosgenin and analogs (e.g. furostanol and spirostanol), plant defense compounds used as main precursors for the industrial production of steroid hormones. During the 5,6-spiroketalization of cholesterol, may catalyze the 27-monohydroxylation of furostanol-type steroid to an intermediate product that undergoes a stereospecific formation of the terminal heterocycle to yield diosgenin. This is Cytochrome P450 CYP82J17 from Trigonella foenum-graecum (Fenugreek).